We begin with the raw amino-acid sequence, 259 residues long: Phosphate import ATP-binding protein PstB 1 (259 aa).

An ABC transporter domain is found at 13-254 (IETKDVDLFY…PAEKETEDYI (242 aa)). ATP is bound at residue 45–52 (GPSGCGKS).

The protein belongs to the ABC transporter superfamily. Phosphate importer (TC 3.A.1.7) family. The complex is composed of two ATP-binding proteins (PstB), two transmembrane proteins (PstC and PstA) and a solute-binding protein (PstS).

The protein localises to the cell membrane. The catalysed reaction is phosphate(out) + ATP + H2O = ADP + 2 phosphate(in) + H(+). Part of the ABC transporter complex PstSACB involved in phosphate import. Responsible for energy coupling to the transport system. This is Phosphate import ATP-binding protein PstB 1 from Listeria innocua serovar 6a (strain ATCC BAA-680 / CLIP 11262).